The following is a 369-amino-acid chain: MRSMNLVDLWAQQACLVFNQTLSYKSFNGFMKIPLKNSKINPKLNKKRPFSPLTVSAIATTKEDERIEAAQTEEPFNFKIYVTEKAISVNKALDEAIIVKEPHVIHEAMRYSLLAGGKRVRPMLCLAACELVGGNQENAMAAACAVEMIHTMSLIHDDLPCMDNDDLRRGKPTNHKIYGEDVAVLAGDSLLAFAFEHIVNSTAGVTPSRIVGAVAELAKSIGTEGLVAGQVADIKCTGNASVSLETLEFIHVHKTAALLESSVVLGAILGGGTNVEVEKLRRFARCIGLLFQVVDDILDVTKSSEELGKTAGKDLVVDKTTYPKLLGLEKAKEFAAELNREAKQQLEGFDSRKAAPLIALADYIAYRDN.

Residues Lys118, Arg121, and His150 each contribute to the isopentenyl diphosphate site. Asp157 and Asp163 together coordinate Mg(2+). Arg168 contacts dimethylallyl diphosphate. Arg169 is an isopentenyl diphosphate binding site. Lys254, Thr255, Gln292, Lys309, and Lys319 together coordinate dimethylallyl diphosphate.

This sequence belongs to the FPP/GGPP synthase family. In terms of assembly, monomer. It depends on Mg(2+) as a cofactor.

It is found in the plastid. Its subcellular location is the chloroplast. The catalysed reaction is isopentenyl diphosphate + dimethylallyl diphosphate = (2E)-geranyl diphosphate + diphosphate. It carries out the reaction isopentenyl diphosphate + (2E)-geranyl diphosphate = (2E,6E)-farnesyl diphosphate + diphosphate. The enzyme catalyses isopentenyl diphosphate + (2E,6E)-farnesyl diphosphate = (2E,6E,10E)-geranylgeranyl diphosphate + diphosphate. It functions in the pathway isoprenoid biosynthesis; farnesyl diphosphate biosynthesis; farnesyl diphosphate from geranyl diphosphate and isopentenyl diphosphate: step 1/1. Its pathway is isoprenoid biosynthesis; geranyl diphosphate biosynthesis; geranyl diphosphate from dimethylallyl diphosphate and isopentenyl diphosphate: step 1/1. It participates in isoprenoid biosynthesis; geranylgeranyl diphosphate biosynthesis; geranylgeranyl diphosphate from farnesyl diphosphate and isopentenyl diphosphate: step 1/1. Catalyzes the trans-addition of the three molecules of IPP onto DMAPP to form geranylgeranyl pyrophosphate. This chain is Geranylgeranyl pyrophosphate synthase, chloroplastic, found in Capsicum annuum (Capsicum pepper).